Here is a 113-residue protein sequence, read N- to C-terminus: Na(+)/H(+) antiporter subunit C1 (113 aa).

3 helical membrane passes run 1–21 (MEIIMIFVSGILTAISVYLVL), 28–48 (IVMGTTLLTHAANLFLITMGG), and 72–92 (LILTAIVIAFATTAFFLVLAF).

It belongs to the CPA3 antiporters (TC 2.A.63) subunit C family. May form a heterooligomeric complex that consists of seven subunits: mnhA1, mnhB1, mnhC1, mnhD1, mnhE1, mnhF1 and mnhG1.

The protein resides in the cell membrane. In terms of biological role, mnh complex is a Na(+)/H(+) antiporter involved in Na(+) excretion. This Staphylococcus aureus (strain JH1) protein is Na(+)/H(+) antiporter subunit C1 (mnhC1).